A 221-amino-acid polypeptide reads, in one-letter code: uncharacterized protein (221 aa).

A signal peptide spans 1-26; that stretch reads MVRLVPRAFAATVALLAAGFSPATAS.

This is an uncharacterized protein from Mycobacterium tuberculosis (strain CDC 1551 / Oshkosh).